A 144-amino-acid chain; its full sequence is Universal stress protein A homolog 1 (144 aa).

Belongs to the universal stress protein A family. Homodimer.

It localises to the cytoplasm. Its function is as follows. Involved in stress response. The polypeptide is Universal stress protein A homolog 1 (uspA1) (Coxiella burnetii (strain RSA 493 / Nine Mile phase I)).